Reading from the N-terminus, the 238-residue chain is uncharacterized protein (238 aa).

This sequence belongs to the chlamydial CPn_0658/CT_538/TC_0825 family.

This is an uncharacterized protein from Chlamydia trachomatis serovar D (strain ATCC VR-885 / DSM 19411 / UW-3/Cx).